A 114-amino-acid chain; its full sequence is T cell receptor beta variable 6-9 (114 aa).

An N-terminal signal peptide occupies residues 1–21 (MSIGLLCCVAFSLLWAGPVNA). Residues 22 to 114 (GVTQTPKFHI…TSVYFCASSY (93 aa)) enclose the Ig-like domain. Cysteine 42 and cysteine 110 are oxidised to a cystine. A glycan (N-linked (GlcNAc...) asparagine) is linked at asparagine 84.

In terms of assembly, alpha-beta TR is a heterodimer composed of an alpha and beta chain; disulfide-linked. The alpha-beta TR is associated with the transmembrane signaling CD3 coreceptor proteins to form the TR-CD3 (TcR or TCR). The assembly of alpha-beta TR heterodimers with CD3 occurs in the endoplasmic reticulum where a single alpha-beta TR heterodimer associates with one CD3D-CD3E heterodimer, one CD3G-CD3E heterodimer and one CD247 homodimer forming a stable octameric structure. CD3D-CD3E and CD3G-CD3E heterodimers preferentially associate with TR alpha and TR beta chains, respectively. The association of the CD247 homodimer is the last step of TcR assembly in the endoplasmic reticulum and is required for transport to the cell surface.

The protein localises to the cell membrane. V region of the variable domain of T cell receptor (TR) beta chain that participates in the antigen recognition. Alpha-beta T cell receptors are antigen specific receptors which are essential to the immune response and are present on the cell surface of T lymphocytes. Recognize peptide-major histocompatibility (MH) (pMH) complexes that are displayed by antigen presenting cells (APC), a prerequisite for efficient T cell adaptive immunity against pathogens. Binding of alpha-beta TR to pMH complex initiates TR-CD3 clustering on the cell surface and intracellular activation of LCK that phosphorylates the ITAM motifs of CD3G, CD3D, CD3E and CD247 enabling the recruitment of ZAP70. In turn ZAP70 phosphorylates LAT, which recruits numerous signaling molecules to form the LAT signalosome. The LAT signalosome propagates signal branching to three major signaling pathways, the calcium, the mitogen-activated protein kinase (MAPK) kinase and the nuclear factor NF-kappa-B (NF-kB) pathways, leading to the mobilization of transcription factors that are critical for gene expression and essential for T cell growth and differentiation. The T cell repertoire is generated in the thymus, by V-(D)-J rearrangement. This repertoire is then shaped by intrathymic selection events to generate a peripheral T cell pool of self-MH restricted, non-autoaggressive T cells. Post-thymic interaction of alpha-beta TR with the pMH complexes shapes TR structural and functional avidity. The sequence is that of T cell receptor beta variable 6-9 from Homo sapiens (Human).